The following is a 209-amino-acid chain: MAIKVLFVDDHEMVRIGISSYLSTQEDIEVVGEGASGKDAITKAHELKPDLILMDLLMDDMDGVEATTEIKKDLPQIKVVMLTSFIEDKEVYRALDSGVDSYILKTTSASDIADAVRKTYEGESVFEPEVLVKMRNRMKKRAELYEMLTEREMEILLLIAKGYSNQEIASASHITIKTVKTHVSNILSKLEVQDRTQAVIYAFQHNLIQ.

The Response regulatory domain maps to 4–120; the sequence is KVLFVDDHEM…DIADAVRKTY (117 aa). D55 carries the post-translational modification 4-aspartylphosphate. The HTH luxR-type domain maps to 141-206; sequence RAELYEMLTE…QAVIYAFQHN (66 aa). Residues 165–184 constitute a DNA-binding region (H-T-H motif); it reads NQEIASASHITIKTVKTHVS.

In terms of processing, phosphorylated by VraS.

The protein localises to the cytoplasm. Its function is as follows. Member of the two-component regulatory system VraS/VraR involved in the control of the cell wall peptidoglycan biosynthesis. The sequence is that of Response regulator protein VraR (vraR) from Staphylococcus epidermidis (strain ATCC 35984 / DSM 28319 / BCRC 17069 / CCUG 31568 / BM 3577 / RP62A).